Reading from the N-terminus, the 281-residue chain is Bifunctional protein FolD (281 aa).

Residues 165-167 (GRS) and serine 190 contribute to the NADP(+) site.

It belongs to the tetrahydrofolate dehydrogenase/cyclohydrolase family. As to quaternary structure, homodimer.

It carries out the reaction (6R)-5,10-methylene-5,6,7,8-tetrahydrofolate + NADP(+) = (6R)-5,10-methenyltetrahydrofolate + NADPH. It catalyses the reaction (6R)-5,10-methenyltetrahydrofolate + H2O = (6R)-10-formyltetrahydrofolate + H(+). The protein operates within one-carbon metabolism; tetrahydrofolate interconversion. In terms of biological role, catalyzes the oxidation of 5,10-methylenetetrahydrofolate to 5,10-methenyltetrahydrofolate and then the hydrolysis of 5,10-methenyltetrahydrofolate to 10-formyltetrahydrofolate. This is Bifunctional protein FolD from Polaromonas naphthalenivorans (strain CJ2).